A 291-amino-acid chain; its full sequence is uncharacterized protein (291 aa).

It belongs to the pseudouridine synthase RluA family.

The catalysed reaction is a uridine in RNA = a pseudouridine in RNA. This is an uncharacterized protein from Synechocystis sp. (strain ATCC 27184 / PCC 6803 / Kazusa).